Reading from the N-terminus, the 28-residue chain is Ranatuerin-2SEc (28 aa).

Cys-23 and Cys-28 are disulfide-bonded.

As to expression, expressed by the skin glands.

It is found in the secreted. Its function is as follows. Mast cell degranulating peptide. Causes histamine release from rat peritoneal mast cells in vitro. Has antibacterial activity against the Gram-negative bacterium E.coli K12 and Gram-positive bacterium M.luteus NCT C2665. In Lithobates sevosus (Dusky gopher frog), this protein is Ranatuerin-2SEc.